A 1465-amino-acid polypeptide reads, in one-letter code: DNA polymerase III PolC-type (1465 aa).

One can recognise an Exonuclease domain in the interval 427-583; sequence YVVFDVETTG…YDAEATGRLL (157 aa).

The protein belongs to the DNA polymerase type-C family. PolC subfamily.

The protein localises to the cytoplasm. It catalyses the reaction DNA(n) + a 2'-deoxyribonucleoside 5'-triphosphate = DNA(n+1) + diphosphate. Its function is as follows. Required for replicative DNA synthesis. This DNA polymerase also exhibits 3' to 5' exonuclease activity. The protein is DNA polymerase III PolC-type of Streptococcus pyogenes serotype M4 (strain MGAS10750).